A 204-amino-acid polypeptide reads, in one-letter code: Large ribosomal subunit protein eL15 (204 aa).

This sequence belongs to the eukaryotic ribosomal protein eL15 family. As to quaternary structure, component of the large ribosomal subunit.

The protein resides in the cytoplasm. Its function is as follows. Component of the large ribosomal subunit. The ribosome is a large ribonucleoprotein complex responsible for the synthesis of proteins in the cell. This Anguilla japonica (Japanese eel) protein is Large ribosomal subunit protein eL15 (rpl15).